Reading from the N-terminus, the 587-residue chain is Pectinesterase 2 (587 aa).

The first 40 residues, 1-40, serve as a signal peptide directing secretion; the sequence is MAPIKEFISKFSDFKNNKKLILSSAAIALLLLASIVGIAA. N-linked (GlcNAc...) asparagine glycosylation is found at asparagine 99 and asparagine 218. 2 residues coordinate substrate: threonine 351 and glutamine 381. The Proton donor role is filled by aspartate 404. A disulfide bridge links cysteine 418 with cysteine 438. The Nucleophile role is filled by aspartate 425. 2 residues coordinate substrate: arginine 493 and tryptophan 495.

This sequence in the N-terminal section; belongs to the PMEI family. The protein in the C-terminal section; belongs to the pectinesterase family. As to expression, expressed in flower buds.

It is found in the secreted. It localises to the cell wall. It carries out the reaction [(1-&gt;4)-alpha-D-galacturonosyl methyl ester](n) + n H2O = [(1-&gt;4)-alpha-D-galacturonosyl](n) + n methanol + n H(+). It functions in the pathway glycan metabolism; pectin degradation; 2-dehydro-3-deoxy-D-gluconate from pectin: step 1/5. In terms of biological role, acts in the modification of cell walls via demethylesterification of cell wall pectin. The sequence is that of Pectinesterase 2 (PME2) from Arabidopsis thaliana (Mouse-ear cress).